Consider the following 192-residue polypeptide: Phosphoheptose isomerase (192 aa).

The region spanning 35 to 192 (LIETLENQGK…CIERHFAHKN (158 aa)) is the SIS domain. 50 to 52 (NGG) provides a ligand contact to substrate. 2 residues coordinate Zn(2+): His-59 and Glu-63. Substrate is bound by residues Glu-63, 92–93 (ND), 118–120 (STS), Ser-123, and Gln-170. Residues Gln-170 and His-178 each contribute to the Zn(2+) site.

The protein belongs to the SIS family. GmhA subfamily. Homotetramer. It depends on Zn(2+) as a cofactor.

It localises to the cytoplasm. It carries out the reaction 2 D-sedoheptulose 7-phosphate = D-glycero-alpha-D-manno-heptose 7-phosphate + D-glycero-beta-D-manno-heptose 7-phosphate. It participates in carbohydrate biosynthesis; D-glycero-D-manno-heptose 7-phosphate biosynthesis; D-glycero-alpha-D-manno-heptose 7-phosphate and D-glycero-beta-D-manno-heptose 7-phosphate from sedoheptulose 7-phosphate: step 1/1. Its function is as follows. Catalyzes the isomerization of sedoheptulose 7-phosphate in D-glycero-D-manno-heptose 7-phosphate. In Helicobacter pylori (strain HPAG1), this protein is Phosphoheptose isomerase.